A 470-amino-acid chain; its full sequence is NADH-quinone oxidoreductase subunit D (470 aa).

A compositionally biased stretch (low complexity) spans 1–18 (MTPSTSTPHTSTAPHTST). The interval 1 to 37 (MTPSTSTPHTSTAPHTSTGQSTDGAAQPGDGSSAYEA) is disordered.

It belongs to the complex I 49 kDa subunit family. NDH-1 is composed of 14 different subunits. Subunits NuoB, C, D, E, F, and G constitute the peripheral sector of the complex.

Its subcellular location is the cell membrane. It carries out the reaction a quinone + NADH + 5 H(+)(in) = a quinol + NAD(+) + 4 H(+)(out). NDH-1 shuttles electrons from NADH, via FMN and iron-sulfur (Fe-S) centers, to quinones in the respiratory chain. The immediate electron acceptor for the enzyme in this species is believed to be a menaquinone. Couples the redox reaction to proton translocation (for every two electrons transferred, four hydrogen ions are translocated across the cytoplasmic membrane), and thus conserves the redox energy in a proton gradient. In Frankia alni (strain DSM 45986 / CECT 9034 / ACN14a), this protein is NADH-quinone oxidoreductase subunit D.